The chain runs to 872 residues: Leucine--tRNA ligase (872 aa).

Residues 42 to 52 (PYPSGSLHMGH) carry the 'HIGH' region motif. The 'KMSKS' region signature appears at 634–638 (TMSKS). Position 637 (Lys637) interacts with ATP.

The protein belongs to the class-I aminoacyl-tRNA synthetase family.

The protein resides in the cytoplasm. It catalyses the reaction tRNA(Leu) + L-leucine + ATP = L-leucyl-tRNA(Leu) + AMP + diphosphate. This Nostoc sp. (strain PCC 7120 / SAG 25.82 / UTEX 2576) protein is Leucine--tRNA ligase.